A 257-amino-acid polypeptide reads, in one-letter code: Snake venom serine protease serpentokallikrein-2 (257 aa).

Residues 1–18 (MVLIRVLANLLILQLSYA) form the signal peptide. Positions 19 to 24 (QKSSEL) are excised as a propeptide. The Peptidase S1 domain maps to 25–248 (VIGGDECNIN…HLDWIKGIIA (224 aa)). 6 disulfide bridges follow: C31–C162, C49–C65, C97–C255, C141–C209, C173–C188, and C199–C224. H64 acts as the Charge relay system in catalysis. N102 carries N-linked (GlcNAc...) asparagine glycosylation. Residue D109 is the Charge relay system of the active site. Residue S203 is the Charge relay system of the active site.

It belongs to the peptidase S1 family. Snake venom subfamily. In terms of assembly, monomer. As to expression, expressed by the venom gland.

It localises to the secreted. In terms of biological role, snake venom serine protease that may act in the hemostasis system of the prey. The chain is Snake venom serine protease serpentokallikrein-2 from Protobothrops mucrosquamatus (Taiwan habu).